Here is a 449-residue protein sequence, read N- to C-terminus: Polyadenylation factor subunit 2 (449 aa).

WD repeat units follow at residues 77 to 116 (KVKH…FESI), 119 to 158 (AHDS…VKVL), 161 to 200 (AHTE…QERV), 203 to 242 (GHHW…NVST), 245 to 285 (GLKH…RELQ), 288 to 328 (RDDM…SNST), and 337 to 376 (AHEK…DPNA). The segment at 411–432 (LPPANETNLGTPQPSILGSESI) is disordered. A compositionally biased stretch (polar residues) spans 415–432 (NETNLGTPQPSILGSESI).

Its subcellular location is the nucleus. Functionally, required for 3'-end cleavage and polyadenylation of pre-mRNAs. Also involved in chromosome segregation where it has a role in chromosome attachment to the mitotic spindle. The chain is Polyadenylation factor subunit 2 (PSF2) from Eremothecium gossypii (strain ATCC 10895 / CBS 109.51 / FGSC 9923 / NRRL Y-1056) (Yeast).